The chain runs to 122 residues: Large ribosomal subunit protein uL14 (122 aa).

The protein belongs to the universal ribosomal protein uL14 family. In terms of assembly, part of the 50S ribosomal subunit. Forms a cluster with proteins L3 and L19. In the 70S ribosome, L14 and L19 interact and together make contacts with the 16S rRNA in bridges B5 and B8.

Functionally, binds to 23S rRNA. Forms part of two intersubunit bridges in the 70S ribosome. The sequence is that of Large ribosomal subunit protein uL14 from Chlorobium limicola (strain DSM 245 / NBRC 103803 / 6330).